Reading from the N-terminus, the 869-residue chain is Valine--tRNA ligase (869 aa).

Residues 47–57 (PYPTGNFHIGN) carry the 'HIGH' region motif. The 'KMSKS' region motif lies at 521–525 (KMSKS). An ATP-binding site is contributed by Lys524.

It belongs to the class-I aminoacyl-tRNA synthetase family. ValS type 2 subfamily.

It localises to the cytoplasm. The enzyme catalyses tRNA(Val) + L-valine + ATP = L-valyl-tRNA(Val) + AMP + diphosphate. Functionally, catalyzes the attachment of valine to tRNA(Val). As ValRS can inadvertently accommodate and process structurally similar amino acids such as threonine, to avoid such errors, it has a 'posttransfer' editing activity that hydrolyzes mischarged Thr-tRNA(Val) in a tRNA-dependent manner. In Methanosarcina mazei (strain ATCC BAA-159 / DSM 3647 / Goe1 / Go1 / JCM 11833 / OCM 88) (Methanosarcina frisia), this protein is Valine--tRNA ligase.